A 101-amino-acid chain; its full sequence is Small ribosomal subunit protein uS14 (101 aa).

The tract at residues 1 to 21 (MAKTSAVEKNKRRRKSVAQQA) is disordered.

The protein belongs to the universal ribosomal protein uS14 family. In terms of assembly, part of the 30S ribosomal subunit. Contacts proteins S3 and S10.

In terms of biological role, binds 16S rRNA, required for the assembly of 30S particles and may also be responsible for determining the conformation of the 16S rRNA at the A site. This is Small ribosomal subunit protein uS14 from Agrobacterium fabrum (strain C58 / ATCC 33970) (Agrobacterium tumefaciens (strain C58)).